The sequence spans 109 residues: Large ribosomal subunit protein eL30 (109 aa).

It belongs to the eukaryotic ribosomal protein eL30 family. In terms of assembly, component of the large ribosomal subunit (LSU). Mature N.crassa ribosomes consist of a small (40S) and a large (60S) subunit. The 40S small subunit contains 1 molecule of ribosomal RNA (18S rRNA) and at least 32 different proteins. The large 60S subunit contains 3 rRNA molecules (26S, 5.8S and 5S rRNA) and at least 42 different proteins.

It localises to the cytoplasm. In terms of biological role, component of the ribosome, a large ribonucleoprotein complex responsible for the synthesis of proteins in the cell. The small ribosomal subunit (SSU) binds messenger RNAs (mRNAs) and translates the encoded message by selecting cognate aminoacyl-transfer RNA (tRNA) molecules. The large subunit (LSU) contains the ribosomal catalytic site termed the peptidyl transferase center (PTC), which catalyzes the formation of peptide bonds, thereby polymerizing the amino acids delivered by tRNAs into a polypeptide chain. The nascent polypeptides leave the ribosome through a tunnel in the LSU and interact with protein factors that function in enzymatic processing, targeting, and the membrane insertion of nascent chains at the exit of the ribosomal tunnel. This is Large ribosomal subunit protein eL30 (rpl-30) from Neurospora crassa (strain ATCC 24698 / 74-OR23-1A / CBS 708.71 / DSM 1257 / FGSC 987).